The primary structure comprises 213 residues: Cytokinin riboside 5'-monophosphate phosphoribohydrolase LOG2 (213 aa).

Substrate contacts are provided by residues glutamate 79, 97–98 (RK), 114–120 (GYGTFEE), and threonine 126.

This sequence belongs to the LOG family. Expressed in roots and shoots. Detected in root hairs.

It is found in the cytoplasm. Its subcellular location is the nucleus. It carries out the reaction N(6)-(dimethylallyl)adenosine 5'-phosphate + H2O = N(6)-dimethylallyladenine + D-ribose 5-phosphate. The catalysed reaction is 9-ribosyl-trans-zeatin 5'-phosphate + H2O = trans-zeatin + D-ribose 5-phosphate. Its function is as follows. Cytokinin-activating enzyme working in the direct activation pathway. Phosphoribohydrolase that converts inactive cytokinin nucleotides to the biologically active free-base forms. The chain is Cytokinin riboside 5'-monophosphate phosphoribohydrolase LOG2 (LOG2) from Arabidopsis thaliana (Mouse-ear cress).